A 337-amino-acid polypeptide reads, in one-letter code: Biotin synthase 1 (337 aa).

Residues 1–23 are disordered; sequence MSSVLTQPLAFHPPRPAVQPREH. Positions 57-284 constitute a Radical SAM core domain; sequence TRVEFATLLS…TARVRLSAGR (228 aa). Residues cysteine 72, cysteine 76, and cysteine 79 each coordinate [4Fe-4S] cluster. Residues cysteine 116, cysteine 147, cysteine 207, and arginine 279 each contribute to the [2Fe-2S] cluster site.

This sequence belongs to the radical SAM superfamily. Biotin synthase family. Homodimer. The cofactor is [4Fe-4S] cluster. Requires [2Fe-2S] cluster as cofactor.

The enzyme catalyses (4R,5S)-dethiobiotin + (sulfur carrier)-SH + 2 reduced [2Fe-2S]-[ferredoxin] + 2 S-adenosyl-L-methionine = (sulfur carrier)-H + biotin + 2 5'-deoxyadenosine + 2 L-methionine + 2 oxidized [2Fe-2S]-[ferredoxin]. It functions in the pathway cofactor biosynthesis; biotin biosynthesis; biotin from 7,8-diaminononanoate: step 2/2. Catalyzes the conversion of dethiobiotin (DTB) to biotin by the insertion of a sulfur atom into dethiobiotin via a radical-based mechanism. This is Biotin synthase 1 from Polaromonas sp. (strain JS666 / ATCC BAA-500).